Consider the following 246-residue polypeptide: 1-(5-phosphoribosyl)-5-[(5-phosphoribosylamino)methylideneamino] imidazole-4-carboxamide isomerase (246 aa).

The active-site Proton acceptor is the D8. The Proton donor role is filled by D131.

Belongs to the HisA/HisF family.

It localises to the cytoplasm. The catalysed reaction is 1-(5-phospho-beta-D-ribosyl)-5-[(5-phospho-beta-D-ribosylamino)methylideneamino]imidazole-4-carboxamide = 5-[(5-phospho-1-deoxy-D-ribulos-1-ylimino)methylamino]-1-(5-phospho-beta-D-ribosyl)imidazole-4-carboxamide. Its pathway is amino-acid biosynthesis; L-histidine biosynthesis; L-histidine from 5-phospho-alpha-D-ribose 1-diphosphate: step 4/9. The chain is 1-(5-phosphoribosyl)-5-[(5-phosphoribosylamino)methylideneamino] imidazole-4-carboxamide isomerase from Lactococcus lactis subsp. cremoris (strain SK11).